Consider the following 944-residue polypeptide: Neutral alpha-glucosidase AB (944 aa).

The first 28 residues, 1–28 (MAAVAAVAARRRRSWASLVLAFLGVCLG), serve as a signal peptide directing secretion. Cysteines 41 and 47 form a disulfide. Phosphoserine is present on Ser52. Asn97 carries N-linked (GlcNAc...) asparagine glycosylation. The disordered stretch occupies residues 181–238 (QRAPRVSQGSKDPAEGDGAQPEETPRDGDKPEETQGKAEKDEPGAWEETFKTHSDSKP). Positions 203 to 236 (ETPRDGDKPEETQGKAEKDEPGAWEETFKTHSDS) are enriched in basic and acidic residues. Substrate is bound by residues Asp283 and Asp429. Catalysis depends on Asp542, which acts as the Nucleophile. Substrate is bound at residue Arg602. The active-site Proton donor is Asp618. An intrachain disulfide couples Cys633 to Cys644. Residue His676 coordinates substrate.

This sequence belongs to the glycosyl hydrolase 31 family. In terms of assembly, heterodimer of a catalytic alpha subunit (GANAB) and a beta subunit (PRKCSH). Binds glycosylated PTPRC. Detected in placenta. Isoform 1 and isoform 2 are expressed in the kidney and liver.

It localises to the endoplasmic reticulum. The protein resides in the golgi apparatus. The protein localises to the melanosome. It catalyses the reaction N(4)-(alpha-D-Glc-(1-&gt;3)-alpha-D-Man-(1-&gt;2)-alpha-D-Man-(1-&gt;2)-alpha-D-Man-(1-&gt;3)-[alpha-D-Man-(1-&gt;2)-alpha-D-Man-(1-&gt;3)-[alpha-D-Man-(1-&gt;2)-alpha-D-Man-(1-&gt;6)]-alpha-D-Man-(1-&gt;6)]-beta-D-Man-(1-&gt;4)-beta-D-GlcNAc-(1-&gt;4)-beta-D-GlcNAc)-L-asparaginyl-[protein] + H2O = N(4)-(alpha-D-Man-(1-&gt;2)-alpha-D-Man-(1-&gt;2)-alpha-D-Man-(1-&gt;3)-[alpha-D-Man-(1-&gt;2)-alpha-D-Man-(1-&gt;3)-[alpha-D-Man-(1-&gt;2)-alpha-D-Man-(1-&gt;6)]-alpha-D-Man-(1-&gt;6)]-beta-D-Man-(1-&gt;4)-beta-D-GlcNAc-(1-&gt;4)-beta-D-GlcNAc)-L-asparaginyl-[protein] (N-glucan mannose isomer 9A1,2,3B1,2,3) + beta-D-glucose. It carries out the reaction N(4)-(alpha-D-Glc-(1-&gt;3)-alpha-D-Glc-(1-&gt;3)-alpha-D-Man-(1-&gt;2)-alpha-D-Man-(1-&gt;2)-alpha-D-Man-(1-&gt;3)-[alpha-D-Man-(1-&gt;2)-alpha-D-Man-(1-&gt;3)-[alpha-D-Man-(1-&gt;2)-alpha-D-Man-(1-&gt;6)]-alpha-D-Man-(1-&gt;6)]-beta-D-Man-(1-&gt;4)-beta-D-GlcNAc-(1-&gt;4)-beta-D-GlcNAc)-L-asparaginyl-[protein] + H2O = N(4)-(alpha-D-Glc-(1-&gt;3)-alpha-D-Man-(1-&gt;2)-alpha-D-Man-(1-&gt;2)-alpha-D-Man-(1-&gt;3)-[alpha-D-Man-(1-&gt;2)-alpha-D-Man-(1-&gt;3)-[alpha-D-Man-(1-&gt;2)-alpha-D-Man-(1-&gt;6)]-alpha-D-Man-(1-&gt;6)]-beta-D-Man-(1-&gt;4)-beta-D-GlcNAc-(1-&gt;4)-beta-D-GlcNAc)-L-asparaginyl-[protein] + beta-D-glucose. The protein operates within glycan metabolism; N-glycan metabolism. Inhibited by deoxynojirimycin. Its function is as follows. Catalytic subunit of glucosidase II that cleaves sequentially the 2 innermost alpha-1,3-linked glucose residues from the Glc(2)Man(9)GlcNAc(2) oligosaccharide precursor of immature glycoproteins. Required for PKD1/Polycystin-1 and PKD2/Polycystin-2 maturation and localization to the cell surface and cilia. The polypeptide is Neutral alpha-glucosidase AB (Homo sapiens (Human)).